A 216-amino-acid chain; its full sequence is Dimethylamine corrinoid protein 1 (216 aa).

Residues 1 to 91 form the B12-binding N-terminal domain; that stretch reads MTSKEELLQE…DMPAGTETKK (91 aa). In terms of domain architecture, B12-binding spans 92–216; it reads LGVIVNGTVE…AKAKELLVGK (125 aa). Histidine 105 is a methylcob(III)alamin binding site.

This sequence belongs to the methylamine corrinoid protein family.

It functions in the pathway one-carbon metabolism; methanogenesis from dimethylamine. Acts as a methyl group carrier between MtbB and MtbA. This chain is Dimethylamine corrinoid protein 1 (mtbC1), found in Methanosarcina mazei (strain ATCC BAA-159 / DSM 3647 / Goe1 / Go1 / JCM 11833 / OCM 88) (Methanosarcina frisia).